We begin with the raw amino-acid sequence, 331 residues long: tRNA-cytidine(32) 2-sulfurtransferase (331 aa).

The interval 1–33 is disordered; sequence MNAPHMNDTAADAATLDDAAAPAGRPALTRREQ. Positions 8–23 are enriched in low complexity; sequence DTAADAATLDDAAAPA. Positions 71 to 76 match the PP-loop motif motif; sequence SGGKDS. [4Fe-4S] cluster is bound by residues C146, C149, and C237.

Belongs to the TtcA family. Homodimer. Requires Mg(2+) as cofactor. It depends on [4Fe-4S] cluster as a cofactor.

It localises to the cytoplasm. It catalyses the reaction cytidine(32) in tRNA + S-sulfanyl-L-cysteinyl-[cysteine desulfurase] + AH2 + ATP = 2-thiocytidine(32) in tRNA + L-cysteinyl-[cysteine desulfurase] + A + AMP + diphosphate + H(+). Its pathway is tRNA modification. Catalyzes the ATP-dependent 2-thiolation of cytidine in position 32 of tRNA, to form 2-thiocytidine (s(2)C32). The sulfur atoms are provided by the cysteine/cysteine desulfurase (IscS) system. This Burkholderia cenocepacia (strain HI2424) protein is tRNA-cytidine(32) 2-sulfurtransferase.